The sequence spans 561 residues: Oxygen-dependent choline dehydrogenase (561 aa).

6–35 (DYIIIGAGSAGNVLATRLTEDADVSVLLLE) contacts FAD. H475 functions as the Proton acceptor in the catalytic mechanism.

It belongs to the GMC oxidoreductase family. FAD is required as a cofactor.

The catalysed reaction is choline + A = betaine aldehyde + AH2. It carries out the reaction betaine aldehyde + NAD(+) + H2O = glycine betaine + NADH + 2 H(+). It functions in the pathway amine and polyamine biosynthesis; betaine biosynthesis via choline pathway; betaine aldehyde from choline (cytochrome c reductase route): step 1/1. In terms of biological role, involved in the biosynthesis of the osmoprotectant glycine betaine. Catalyzes the oxidation of choline to betaine aldehyde and betaine aldehyde to glycine betaine at the same rate. This Pseudomonas aeruginosa (strain UCBPP-PA14) protein is Oxygen-dependent choline dehydrogenase.